The following is a 542-amino-acid chain: Cytochrome P450 734A6 (542 aa).

Residues 2-22 (GWWGWAAAAAAAAAWVAVKVL) form a helical membrane-spanning segment. Heme is bound at residue cysteine 474.

This sequence belongs to the cytochrome P450 family. Heme is required as a cofactor. As to expression, highly expressed in leaf sheaths. Expressed in roots, shoot apex, leaf blades, internodes and panicles.

The protein resides in the membrane. Functionally, cytochrome P450 involved in brassinosteroids (BRs) inactivation and regulation of BRs homeostasis. Is a multifunctional and multisubstrate enzyme that controls the endogenous bioactive BR content both by direct inactivation of castasterone (CS) and by decreasing the levels of BR precursors. Catalyzes the oxidation of carbon 22 hydroxylated BR intermediates to produce C26 oxidized metabolites. In Oryza sativa subsp. japonica (Rice), this protein is Cytochrome P450 734A6 (CYP734A6).